Consider the following 526-residue polypeptide: Putative D-lactate dehydrogenase C713.03, mitochondrial (526 aa).

The FAD-binding PCMH-type domain maps to 93-272; the sequence is YRGKTQLALK…TKLSVICPKR (180 aa).

Belongs to the FAD-binding oxidoreductase/transferase type 4 family. It depends on FAD as a cofactor.

The protein localises to the mitochondrion matrix. It carries out the reaction (R)-lactate + 2 Fe(III)-[cytochrome c] = 2 Fe(II)-[cytochrome c] + pyruvate + 2 H(+). The protein is Putative D-lactate dehydrogenase C713.03, mitochondrial of Schizosaccharomyces pombe (strain 972 / ATCC 24843) (Fission yeast).